Here is a 293-residue protein sequence, read N- to C-terminus: Acetyl-coenzyme A carboxylase carboxyl transferase subunit beta (293 aa).

The CoA carboxyltransferase N-terminal domain occupies Leu29–Lys293. Zn(2+) contacts are provided by Cys33, Cys36, Cys52, and Cys55. Residues Cys33–Cys55 form a C4-type zinc finger.

This sequence belongs to the AccD/PCCB family. In terms of assembly, acetyl-CoA carboxylase is a heterohexamer composed of biotin carboxyl carrier protein (AccB), biotin carboxylase (AccC) and two subunits each of ACCase subunit alpha (AccA) and ACCase subunit beta (AccD). The cofactor is Zn(2+).

The protein localises to the cytoplasm. The enzyme catalyses N(6)-carboxybiotinyl-L-lysyl-[protein] + acetyl-CoA = N(6)-biotinyl-L-lysyl-[protein] + malonyl-CoA. The protein operates within lipid metabolism; malonyl-CoA biosynthesis; malonyl-CoA from acetyl-CoA: step 1/1. Functionally, component of the acetyl coenzyme A carboxylase (ACC) complex. Biotin carboxylase (BC) catalyzes the carboxylation of biotin on its carrier protein (BCCP) and then the CO(2) group is transferred by the transcarboxylase to acetyl-CoA to form malonyl-CoA. The protein is Acetyl-coenzyme A carboxylase carboxyl transferase subunit beta of Prochlorococcus marinus (strain MIT 9303).